A 514-amino-acid polypeptide reads, in one-letter code: Folylpolyglutamate synthase (514 aa).

82–85 (GKGS) contacts ATP. Ser-107, Glu-186, and His-214 together coordinate Mg(2+). Positions 339 and 355 each coordinate ATP.

The protein belongs to the folylpolyglutamate synthase family. A monovalent cation serves as cofactor.

The protein localises to the mitochondrion inner membrane. Its subcellular location is the mitochondrion matrix. It is found in the cytoplasm. The enzyme catalyses (6S)-5,6,7,8-tetrahydrofolyl-(gamma-L-Glu)(n) + L-glutamate + ATP = (6S)-5,6,7,8-tetrahydrofolyl-(gamma-L-Glu)(n+1) + ADP + phosphate + H(+). Its pathway is cofactor biosynthesis; tetrahydrofolylpolyglutamate biosynthesis. Functionally, catalyzes conversion of folates to polyglutamate derivatives allowing concentration of folate compounds in the cell and the intracellular retention of these cofactors, which are important substrates for most of the folate-dependent enzymes that are involved in one-carbon transfer reactions involved in purine, pyrimidine and amino acid synthesis. The sequence is that of Folylpolyglutamate synthase (MET7) from Candida albicans (Yeast).